A 472-amino-acid chain; its full sequence is Trigger factor (472 aa).

The region spanning 174-261 (GDIALVSFKG…LEDLKIKELP (88 aa)) is the PPIase FKBP-type domain. Residues 433–472 (NNTVVEKPPEKARDQIKEKSSKKKTTKTNKEKKSSKTPKS) form a disordered region. Residues 439–451 (KPPEKARDQIKEK) are compositionally biased toward basic and acidic residues.

It belongs to the FKBP-type PPIase family. Tig subfamily.

It localises to the cytoplasm. It catalyses the reaction [protein]-peptidylproline (omega=180) = [protein]-peptidylproline (omega=0). Its function is as follows. Involved in protein export. Acts as a chaperone by maintaining the newly synthesized protein in an open conformation. Functions as a peptidyl-prolyl cis-trans isomerase. This chain is Trigger factor, found in Prochlorococcus marinus (strain NATL1A).